Here is a 426-residue protein sequence, read N- to C-terminus: Putative 3-oxoacyl-[acyl-carrier-protein] synthase, mitochondrial (426 aa).

The transit peptide at 1–18 (MKRVVITGLGAVTPLGNG) directs the protein to the mitochondrion. In terms of domain architecture, Ketosynthase family 3 (KS3) spans 19–423 (VKTNWRNLIQ…GTNASLCFKK (405 aa)). Active-site for beta-ketoacyl synthase activity residues include cysteine 170, histidine 311, and histidine 351.

This sequence belongs to the thiolase-like superfamily. Beta-ketoacyl-ACP synthases family.

The protein resides in the mitochondrion. It carries out the reaction a fatty acyl-[ACP] + malonyl-[ACP] + H(+) = a 3-oxoacyl-[ACP] + holo-[ACP] + CO2. The catalysed reaction is butanoyl-[ACP] + malonyl-[ACP] + H(+) = 3-oxohexanoyl-[ACP] + holo-[ACP] + CO2. The enzyme catalyses hexanoyl-[ACP] + malonyl-[ACP] + H(+) = 3-oxooctanoyl-[ACP] + holo-[ACP] + CO2. It catalyses the reaction octanoyl-[ACP] + malonyl-[ACP] + H(+) = 3-oxodecanoyl-[ACP] + holo-[ACP] + CO2. It carries out the reaction decanoyl-[ACP] + malonyl-[ACP] + H(+) = 3-oxododecanoyl-[ACP] + holo-[ACP] + CO2. The catalysed reaction is dodecanoyl-[ACP] + malonyl-[ACP] + H(+) = 3-oxotetradecanoyl-[ACP] + holo-[ACP] + CO2. The enzyme catalyses tetradecanoyl-[ACP] + malonyl-[ACP] + H(+) = 3-oxohexadecanoyl-[ACP] + holo-[ACP] + CO2. Its pathway is lipid metabolism; fatty acid biosynthesis. Its function is as follows. May play a role in the biosynthesis of lipoic acid as well as longer chain fatty acids required for optimal mitochondrial function. The polypeptide is Putative 3-oxoacyl-[acyl-carrier-protein] synthase, mitochondrial (Schizosaccharomyces pombe (strain 972 / ATCC 24843) (Fission yeast)).